Here is a 204-residue protein sequence, read N- to C-terminus: FMN-dependent NADH:quinone oxidoreductase (204 aa).

FMN contacts are provided by residues Ser-10, 16 to 18, and 96 to 99; these read SIS and MYNF.

It belongs to the azoreductase type 1 family. In terms of assembly, homodimer. The cofactor is FMN.

The catalysed reaction is 2 a quinone + NADH + H(+) = 2 a 1,4-benzosemiquinone + NAD(+). It carries out the reaction N,N-dimethyl-1,4-phenylenediamine + anthranilate + 2 NAD(+) = 2-(4-dimethylaminophenyl)diazenylbenzoate + 2 NADH + 2 H(+). Quinone reductase that provides resistance to thiol-specific stress caused by electrophilic quinones. Its function is as follows. Also exhibits azoreductase activity. Catalyzes the reductive cleavage of the azo bond in aromatic azo compounds to the corresponding amines. The protein is FMN-dependent NADH:quinone oxidoreductase of Herminiimonas arsenicoxydans.